The sequence spans 1807 residues: Nucleoporin nup189 (1807 aa).

The tract at residues 1-118 (MFGQNNSSGF…SGGGLFGSNT (118 aa)) is disordered. 2 GLFG repeats span residues 26–29 (GLFG) and 66–69 (GLFG). The span at 29-61 (GSNSNTPGNTLFGSQNTSTTGFGQNTTQPLFGS) shows a compositional bias: polar residues. The segment covering 62-77 (NTNGGLFGNRNNTTTT) has biased composition (low complexity). The span at 78–90 (GGTGFGMSSGTGM) shows a compositional bias: gly residues. Residues 93-108 (QSNTPAFGGTNNATNP) show a composition bias toward polar residues. GLFG repeat units follow at residues 112–115 (GLFG), 152–155 (GLFG), 177–180 (GLFG), 308–311 (GLFG), 335–338 (GLFG), 350–353 (GLFG), 381–384 (GLFG), 399–402 (GLFG), 435–438 (GLFG), and 521–524 (GLFG). The segment covering 565 to 584 (PGTGLFGSTQTNNATSNTGT) has biased composition (polar residues). The interval 565–685 (PGTGLFGSTQ…SSTTSQVAPT (121 aa)) is disordered. GLFG repeat units follow at residues 585–588 (GLFG), 611–614 (GLFG), 627–630 (GLFG), and 646–649 (GLFG). The span at 588–600 (GSNNANTTNTGGS) shows a compositional bias: low complexity. Over residues 603 to 644 (NKPSTTTGGLFGNTTAQQPSTTTSGLFGASNTNNQAQTSNFG) the composition is skewed to polar residues. Low complexity predominate over residues 653–663 (AGQQQQPLQAS). Over residues 664–685 (IDQNPYGNNPLFSSTTSQVAPT) the composition is skewed to polar residues. A Phosphoserine modification is found at S724. The disordered stretch occupies residues 785 to 814 (QNGVKNGNDAKSDSKVQEKAPQNEADGSLK). Residues 792–802 (NDAKSDSKVQE) show a composition bias toward basic and acidic residues. Positions 822–963 (SDDYWMKPSI…GKWIFKVQHF (142 aa)) constitute a Peptidase S59 domain. Residues 974 to 1020 (EENDMSSTSNEAGNLKKYDQPNLKVSGKNDSFVTHHTPGAFPNDSKN) form a disordered region. S1051 is subject to Phosphoserine. The interval 1082–1104 (KENNVPLSEDDLSNSSESSNESV) is disordered. A compositionally biased stretch (low complexity) spans 1094 to 1104 (SNSSESSNESV).

Belongs to the nucleoporin GLFG family. Interacts (via G-L-F-G repeats) with rpn15/dss1. Interacts with raf1. In terms of assembly, interacts with ned1. In terms of processing, nup189 is autocatalytically cleaved in nup98 and nup96.

It is found in the nucleus. It localises to the nuclear pore complex. Functions as a component of the nuclear pore complex (NPC). NPC components, collectively referred to as nucleoporins (NUPs), can play the role of both NPC structural components and of docking or interaction partners for transiently associated nuclear transport factors. Active directional transport is assured by both, a Phe-Gly (FG) repeat affinity gradient for these transport factors across the NPC and a transport cofactor concentration gradient across the nuclear envelope. Nup189 is autocatalytically cleaved in vivo in 2 polypeptides which assume different functions in the NPC. Nup98 as one of the FG repeat nucleoporins participates in karyopherin interactions and contains part of the autocatalytic cleavage activity. Nup96 as part of the NUP84 complex is involved in nuclear poly(A)+ RNA and tRNA export. This Schizosaccharomyces pombe (strain 972 / ATCC 24843) (Fission yeast) protein is Nucleoporin nup189 (nup189).